Here is a 208-residue protein sequence, read N- to C-terminus: Ras-related protein M-Ras (208 aa).

GTP contacts are provided by D21, G22, G23, V24, G25, K26, S27, A28, F38, V39, P40, Y42, P44, and T45. A Mg(2+)-binding site is contributed by S27. Positions Y42–Y50 match the Effector region motif. T45 and D67 together coordinate Mg(2+). G70, N126, K127, D129, S156, A157, and K158 together coordinate GTP. Position 205 is a cysteine methyl ester (C205). C205 carries S-geranylgeranyl cysteine lipidation. Residues V206 to L208 constitute a propeptide, removed in mature form.

This sequence belongs to the small GTPase superfamily. Ras family. As to quaternary structure, component of the SHOC2-MRAS-PP1c (SMP) holophosphatase complex consisting of SHOC2, GTP-bound M-Ras/MRAS and the catalytic subunit of protein phosphatase 1 (either PPP1CA, PPP1CB or PPP1CC). Interacts (active GTP-bound form) with both SHOC2 and PP1c (all isoforms) to form a tertiary complex; SHOC2 and PP1c preferably bind M-Ras/MRAS, but they also bind K-Ras/KRAS, N-Ras/NRAS and H-Ras/HRAS. Interacts with RGL3. Interacts (active GTP-bound form preferentially) with RGS14. Requires Mg(2+) as cofactor. Expression highly restricted to the brain and heart.

It localises to the cell membrane. The catalysed reaction is GTP + H2O = GDP + phosphate + H(+). Its function is as follows. Signal transducer in the Ras-MAPK signaling pathway that regulates cell proliferation and survival. Core component of the SHOC2-MRAS-PP1c (SMP) holophosphatase complex that regulates the MAPK pathway activation. The formation of the SMP complex only occurs when MRAS is GTP-bound. MRAS has low intrinsic GTPase activity and may require additional factors for activation. The SMP complex specifically dephosphorylates the inhibitory phosphorylation at 'Ser-259' of RAF1 kinase, 'Ser-365' of BRAF kinase and 'Ser-214' of ARAF kinase, stimulating their kinase activities. This is Ras-related protein M-Ras (MRAS) from Homo sapiens (Human).